The primary structure comprises 537 residues: Oocyte zinc finger protein XlCOF29 (537 aa).

Positions 1–21 (MGMSEKASDTGMKGKKKDKNE) are disordered. C2H2-type zinc fingers lie at residues 375 to 397 (FTCS…LKSH), 403 to 425 (FSCS…RRLH), 431 to 453 (FPCA…SKTH), 459 to 481 (YSCT…KKRH), 487 to 509 (YTCS…VRIH), and 515 to 537 (FSCS…ERMH).

Belongs to the krueppel C2H2-type zinc-finger protein family.

Its subcellular location is the nucleus. May be involved in transcriptional regulation. This chain is Oocyte zinc finger protein XlCOF29, found in Xenopus laevis (African clawed frog).